A 572-amino-acid polypeptide reads, in one-letter code: Proline dehydrogenase 1, mitochondrial (572 aa).

The span at 105–124 shows a compositional bias: low complexity; it reads NHSNQTNNVNNKNYNNNNNN. A disordered region spans residues 105-140; sequence NHSNQTNNVNNKNYNNNNNNFEKDDKFGPPNNQNNN.

Belongs to the proline oxidase family. FAD serves as cofactor.

Its subcellular location is the mitochondrion matrix. It carries out the reaction L-proline + a quinone = (S)-1-pyrroline-5-carboxylate + a quinol + H(+). Its pathway is amino-acid degradation; L-proline degradation into L-glutamate; L-glutamate from L-proline: step 1/2. Converts proline to delta-1-pyrroline-5-carboxylate. The protein is Proline dehydrogenase 1, mitochondrial (prodh) of Dictyostelium discoideum (Social amoeba).